The sequence spans 648 residues: Translation factor GUF1 homolog, mitochondrial (648 aa).

A tr-type G domain is found at 55–247; it reads ERVRNFSIIA…AVIERIPSPP (193 aa). GTP is bound by residues 64–71, 140–144, and 194–197; these read AHVDHGKS, DTPGH, and NKID.

The protein belongs to the TRAFAC class translation factor GTPase superfamily. Classic translation factor GTPase family. LepA subfamily.

The protein localises to the mitochondrion inner membrane. It carries out the reaction GTP + H2O = GDP + phosphate + H(+). Its function is as follows. Promotes mitochondrial protein synthesis. May act as a fidelity factor of the translation reaction, by catalyzing a one-codon backward translocation of tRNAs on improperly translocated ribosomes. Binds to mitochondrial ribosomes in a GTP-dependent manner. The protein is Translation factor GUF1 homolog, mitochondrial of Oryza sativa subsp. indica (Rice).